The following is a 229-amino-acid chain: Large ribosomal subunit protein uL1 (229 aa).

Belongs to the universal ribosomal protein uL1 family. As to quaternary structure, part of the 50S ribosomal subunit.

Binds directly to 23S rRNA. The L1 stalk is quite mobile in the ribosome, and is involved in E site tRNA release. In terms of biological role, protein L1 is also a translational repressor protein, it controls the translation of the L11 operon by binding to its mRNA. This is Large ribosomal subunit protein uL1 from Listeria monocytogenes serovar 1/2a (strain ATCC BAA-679 / EGD-e).